The following is a 207-amino-acid chain: Large ribosomal subunit protein uL4 (207 aa).

The protein belongs to the universal ribosomal protein uL4 family. In terms of assembly, part of the 50S ribosomal subunit.

Functionally, one of the primary rRNA binding proteins, this protein initially binds near the 5'-end of the 23S rRNA. It is important during the early stages of 50S assembly. It makes multiple contacts with different domains of the 23S rRNA in the assembled 50S subunit and ribosome. In terms of biological role, forms part of the polypeptide exit tunnel. The protein is Large ribosomal subunit protein uL4 of Geobacter sulfurreducens (strain ATCC 51573 / DSM 12127 / PCA).